Reading from the N-terminus, the 30-residue chain is Large ribosomal subunit protein bL25 (30 aa).

The protein belongs to the bacterial ribosomal protein bL25 family. Part of the 50S ribosomal subunit; part of the 5S rRNA/L5/L18/L25 subcomplex. Contacts the 5S rRNA. Binds to the 5S rRNA independently of L5 and L18.

This is one of the proteins that binds to the 5S RNA in the ribosome where it forms part of the central protuberance. The polypeptide is Large ribosomal subunit protein bL25 (rplY) (Anabaena variabilis).